The following is a 348-amino-acid chain: Olfactory receptor 2T4 (348 aa).

The Extracellular portion of the chain corresponds to 1–57 (MDNITWMASHTGWSDFILMGLFRQSKHPMANITWMANHTGWSDFILLGLFRQSKHPA). Asn31 and Asn37 each carry an N-linked (GlcNAc...) asparagine glycan. A helical transmembrane segment spans residues 58 to 81 (LLCVVIFVVFLMALSGNAVLILLI). Over 82-89 (HCDAHLHT) the chain is Cytoplasmic. Residues 90–111 (PMYFFISQLSLMDMAYISVTVP) form a helical membrane-spanning segment. Residues 112–132 (KMLLDQVMGVNKISAPECGMQ) lie on the Extracellular side of the membrane. Residues Cys129 and Cys221 are joined by a disulfide bond. A helical membrane pass occupies residues 133–152 (MFFYVTLAGSEFFLLATMAY). The Cytoplasmic segment spans residues 153 to 171 (DRYVAICHPLRYPVLMNHR). Residues 172 to 190 (VCLFLSSGCWFLGSVDGFT) traverse the membrane as a helical segment. Over 191 to 227 (FTPITMTFPFRGSREIHHFFCEVPAVLNLSCSDTSLY) the chain is Extracellular. Asn218 carries N-linked (GlcNAc...) asparagine glycosylation. The chain crosses the membrane as a helical span at residues 228-251 (EIFMYLCCVLMLLIPVVIISSSYL). The Cytoplasmic portion of the chain corresponds to 252–268 (LILLTIHGMNSAEGRKK). A helical transmembrane segment spans residues 269–291 (AFATCSSHLTVVILFYGAAIYTY). Topologically, residues 292 to 304 (MLPSSYHTPEKDM) are extracellular. Residues 305-324 (MVSVFYTILTPVVNPLIYSL) traverse the membrane as a helical segment. The Cytoplasmic portion of the chain corresponds to 325-348 (RNKDVMGALKKMLTVEPAFQKAME).

This sequence belongs to the G-protein coupled receptor 1 family.

The protein resides in the cell membrane. Odorant receptor. The polypeptide is Olfactory receptor 2T4 (OR2T4) (Homo sapiens (Human)).